Reading from the N-terminus, the 345-residue chain is D-alanine--D-alanine ligase (345 aa).

An ATP-grasp domain is found at 133–340; the sequence is KLYAKERGVK…IDYRYIHQIQ (208 aa). Residue 162–211 coordinates ATP; sequence PLIVKPLRLGSSIGVSIAKNRQELDYALDVAFEFDEAALLEPFMQGIKEY. The Mg(2+) site is built by D284, E296, and N298.

Belongs to the D-alanine--D-alanine ligase family. Mg(2+) serves as cofactor. Requires Mn(2+) as cofactor.

It is found in the cytoplasm. The enzyme catalyses 2 D-alanine + ATP = D-alanyl-D-alanine + ADP + phosphate + H(+). It participates in cell wall biogenesis; peptidoglycan biosynthesis. Its function is as follows. Cell wall formation. This chain is D-alanine--D-alanine ligase, found in Wolinella succinogenes (strain ATCC 29543 / DSM 1740 / CCUG 13145 / JCM 31913 / LMG 7466 / NCTC 11488 / FDC 602W) (Vibrio succinogenes).